The following is a 287-amino-acid chain: Ferredoxin-type protein NapH (287 aa).

The Cytoplasmic segment spans residues 1 to 29 (MANRKRDAGREALEKKGWWRSHRWLVLRR). A helical membrane pass occupies residues 30 to 50 (LCQFFVLGMFLSGPWFGVWIL). Over 51–79 (HGNYSSSLLFDTVPLTDPLMTLQSLASGH) the chain is Periplasmic. The chain crosses the membrane as a helical span at residues 80-100 (LPATVALTGAVIITVLYALAG). The Cytoplasmic segment spans residues 101 to 139 (KRLFCSWVCPLNPITDLANWLRRRFDLNQSATIPRHIRY). A helical membrane pass occupies residues 140–160 (VLLVVILVGSALTGTLIWEWI). Residues 161-170 (NPVSLMGRSL) lie on the Periplasmic side of the membrane. A helical transmembrane segment spans residues 171-191 (VMGFGSGALLILALFLFDLLV). Residues 192 to 287 (VEHGWCGHIC…TTRWSSGAKS (96 aa)) lie on the Cytoplasmic side of the membrane. 4Fe-4S ferredoxin-type domains follow at residues 217–247 (TVAATDRQKCNRCMDCFHVCPEPHVLRAPVL) and 251–280 (SPVQVTSRDCMTCGRCVDVCSEDVFTITTR). [4Fe-4S] cluster-binding residues include cysteine 226, cysteine 229, cysteine 232, cysteine 236, cysteine 260, cysteine 263, cysteine 266, and cysteine 270.

In terms of assembly, interacts with NapC. Requires [4Fe-4S] cluster as cofactor.

The protein localises to the cell inner membrane. In terms of biological role, required for electron transfer from ubiquinol, via NapC, to the periplasmic nitrate reductase NapAB complex. This chain is Ferredoxin-type protein NapH (napH), found in Escherichia coli (strain K12).